The primary structure comprises 81 residues: 2,3-bisphosphoglycerate-independent phosphoglycerate mutase (81 aa).

The active-site Phosphoserine intermediate is S14. Mn(2+) is bound at residue S14. Residue H75 participates in substrate binding.

This sequence belongs to the BPG-independent phosphoglycerate mutase family. As to quaternary structure, monomer. The cofactor is Mn(2+).

The catalysed reaction is (2R)-2-phosphoglycerate = (2R)-3-phosphoglycerate. It participates in carbohydrate degradation; glycolysis; pyruvate from D-glyceraldehyde 3-phosphate: step 3/5. Catalyzes the interconversion of 2-phosphoglycerate and 3-phosphoglycerate. This chain is 2,3-bisphosphoglycerate-independent phosphoglycerate mutase (gpmI), found in Tomato big bud phytoplasma.